Consider the following 293-residue polypeptide: Bifunctional monothiol glutaredoxin-S16, chloroplastic (293 aa).

The transit peptide at 1-62 directs the protein to the chloroplast; sequence MAAITISSSL…APSRRRSFFI (62 aa). C123 and C219 are joined by a disulfide. The 100-residue stretch at 194–293 folds into the Glutaredoxin domain; it reads EELIDRLVKE…ENGELANILN (100 aa). K211 contacts glutathione. C219 is a [2Fe-2S] cluster binding site. Glutathione contacts are provided by residues R251, F263, and 276–277; that span reads CD.

It belongs to the glutaredoxin family. CGFS subfamily. [2Fe-2S]-bridged holo-homodimer. Interacts in vitro with SUFE1, BOLA1, BOLA2 and BOLA4. Interacts in vivo only with SUFE1, BOLA1 and BOLA4. Interacts with SBP1.

The protein resides in the plastid. Its subcellular location is the chloroplast. Its activity is regulated as follows. The formation of an intramolecular disulfide bond negatively regulates both the N-terminal endonuclease and the C-terminal glutaredoxin activities. Its function is as follows. May only reduce GSH-thiol disulfides, but not protein disulfides. Participates probably to the maturation of iron-sulfur proteins and to the regulation of the redox state of the BOLA proteins. The GRXS16-BOLA1 heterodimer binds a labile, oxygen sensitive iron-sulfur cluster. Able to cleave linearized DNA in vitro. This Arabidopsis thaliana (Mouse-ear cress) protein is Bifunctional monothiol glutaredoxin-S16, chloroplastic.